A 343-amino-acid polypeptide reads, in one-letter code: Heat-inducible transcription repressor HrcA (343 aa).

It belongs to the HrcA family.

Its function is as follows. Negative regulator of class I heat shock genes (grpE-dnaK-dnaJ and groELS operons). Prevents heat-shock induction of these operons. In Bacillus cytotoxicus (strain DSM 22905 / CIP 110041 / 391-98 / NVH 391-98), this protein is Heat-inducible transcription repressor HrcA.